Here is a 179-residue protein sequence, read N- to C-terminus: Large ribosomal subunit protein uL5 (179 aa).

It belongs to the universal ribosomal protein uL5 family. Part of the 50S ribosomal subunit; part of the 5S rRNA/L5/L18/L25 subcomplex. Contacts the 5S rRNA and the P site tRNA. Forms a bridge to the 30S subunit in the 70S ribosome.

In terms of biological role, this is one of the proteins that bind and probably mediate the attachment of the 5S RNA into the large ribosomal subunit, where it forms part of the central protuberance. In the 70S ribosome it contacts protein S13 of the 30S subunit (bridge B1b), connecting the 2 subunits; this bridge is implicated in subunit movement. Contacts the P site tRNA; the 5S rRNA and some of its associated proteins might help stabilize positioning of ribosome-bound tRNAs. The sequence is that of Large ribosomal subunit protein uL5 from Prochlorococcus marinus (strain AS9601).